The following is a 293-amino-acid chain: Nucleotide-binding protein BC_5156 (293 aa).

14 to 21 (GMSGAGKT) serves as a coordination point for ATP. 65-68 (DLRG) serves as a coordination point for GTP.

This sequence belongs to the RapZ-like family.

Functionally, displays ATPase and GTPase activities. This is Nucleotide-binding protein BC_5156 from Bacillus cereus (strain ATCC 14579 / DSM 31 / CCUG 7414 / JCM 2152 / NBRC 15305 / NCIMB 9373 / NCTC 2599 / NRRL B-3711).